A 1000-amino-acid chain; its full sequence is uncharacterized protein (1000 aa).

A compositionally biased stretch (basic and acidic residues) spans 787–809 (RQYEKLKRQRAKSETERHQERHG). The tract at residues 787–812 (RQYEKLKRQRAKSETERHQERHGKLS) is disordered.

This is an uncharacterized protein from Picosynechococcus sp. (strain ATCC 27264 / PCC 7002 / PR-6) (Agmenellum quadruplicatum).